A 304-amino-acid chain; its full sequence is D-alanine--D-alanine ligase (304 aa).

Residues 100-301 (KLVALQSGIP…FGEFLEDLIK (202 aa)) form the ATP-grasp domain. 129–184 (ERKLGSPFIVKPCDVGSTIGLSLVRSASEYEVALEEAFRFSDRLLLEEFIDGFEVT) contributes to the ATP binding site. Residues D256, E268, and N270 each coordinate Mg(2+).

The protein belongs to the D-alanine--D-alanine ligase family. It depends on Mg(2+) as a cofactor. The cofactor is Mn(2+).

It is found in the cytoplasm. The catalysed reaction is 2 D-alanine + ATP = D-alanyl-D-alanine + ADP + phosphate + H(+). It participates in cell wall biogenesis; peptidoglycan biosynthesis. In terms of biological role, cell wall formation. The chain is D-alanine--D-alanine ligase from Coprothermobacter proteolyticus (strain ATCC 35245 / DSM 5265 / OCM 4 / BT).